A 122-amino-acid chain; its full sequence is Fluoride-specific ion channel FluC (122 aa).

4 helical membrane-spanning segments follow: residues 4–24 (LAVL…SIFI), 33–53 (LGTM…SIYL), 66–86 (LLIT…LEGI), and 95–115 (LKAF…VALG). Gly-73 and Thr-76 together coordinate Na(+).

The protein belongs to the fluoride channel Fluc/FEX (TC 1.A.43) family.

Its subcellular location is the cell inner membrane. The enzyme catalyses fluoride(in) = fluoride(out). With respect to regulation, na(+) is not transported, but it plays an essential structural role and its presence is essential for fluoride channel function. Functionally, fluoride-specific ion channel. Important for reducing fluoride concentration in the cell, thus reducing its toxicity. In Hydrogenobaculum sp. (strain Y04AAS1), this protein is Fluoride-specific ion channel FluC.